A 545-amino-acid chain; its full sequence is Zinc finger protein with KRAB and SCAN domains 4 (545 aa).

The disordered stretch occupies residues 1 to 22 (MAREPRKNAALDAQSAEDQTGL). Glycyl lysine isopeptide (Lys-Gly) (interchain with G-Cter in SUMO2) cross-links involve residues K26 and K29. Positions 34–55 (ALTAEVRAPCSPARGPERSRQR) are disordered. Positions 53-135 (RQRFRGFRYP…VLLEYLERQL (83 aa)) constitute an SCAN box domain. Residues K178 and K222 each participate in a glycyl lysine isopeptide (Lys-Gly) (interchain with G-Cter in SUMO2) cross-link. The 97-residue stretch at 221 to 317 (LKMEDVALTL…QRKQKNAIGS (97 aa)) folds into the KRAB domain. 5 consecutive C2H2-type zinc fingers follow at residues 320–342 (HYCH…RRIH), 348–370 (YECE…QRVH), 376–398 (YECE…QRTH), 404–426 (YECD…HKIH), and 432–454 (YQCN…QRIH). The segment covering 455 to 467 (GDKNVQNPEHGES) has biased composition (basic and acidic residues). The tract at residues 455–480 (GDKNVQNPEHGESWESQGRTESQWEN) is disordered. A compositionally biased stretch (polar residues) spans 468-480 (WESQGRTESQWEN). 2 consecutive C2H2-type zinc fingers follow at residues 487 to 509 (YKCN…QKIH) and 515 to 537 (YQCD…QRSH).

Belongs to the krueppel C2H2-type zinc-finger protein family. Expressed in adult heart, brain, placenta, lung and kidney, but not in adult liver and skeletal muscle. In 17-day old embryo, detected in liver, skeletal muscle, brain, heart and small intestine.

The protein resides in the nucleus. In terms of biological role, may be involved in the transcriptional activation of MDM2 and EP300 genes. The protein is Zinc finger protein with KRAB and SCAN domains 4 (ZKSCAN4) of Homo sapiens (Human).